A 385-amino-acid polypeptide reads, in one-letter code: Cytochrome b (385 aa).

The next 4 membrane-spanning stretches (helical) occupy residues 34–54 (FGSLTGLCLALQIISGLLLTM), 78–99 (WFIRNVHISGASLFFTCMFIHI), 114–134 (WYSGVILFILSMLTAFLGYVL), and 179–199 (FLVLHFLMPFSMIAVSLIHLV). 2 residues coordinate heme b: His84 and His98. Heme b-binding residues include His183 and His197. His202 is a binding site for a ubiquinone. A run of 4 helical transmembrane segments spans residues 227 to 247 (FKDILGFSFLLTFLITFSLLL), 289 to 309 (LAGIIALVMSLSVLLLMPILI), 321 to 341 (LMQVTFWLMVCNFIFLSWLGA), and 348 to 368 (FILMSQISSFIYFFIFFVMFP).

Belongs to the cytochrome b family. In terms of assembly, the cytochrome bc1 complex contains 3 respiratory subunits (MT-CYB, CYC1 and UQCRFS1), 2 core proteins (UQCRC1 and UQCRC2) and probably 6 low-molecular weight proteins. Heme b is required as a cofactor.

It is found in the mitochondrion inner membrane. In terms of biological role, component of the ubiquinol-cytochrome c reductase complex (complex III or cytochrome b-c1 complex) that is part of the mitochondrial respiratory chain. The b-c1 complex mediates electron transfer from ubiquinol to cytochrome c. Contributes to the generation of a proton gradient across the mitochondrial membrane that is then used for ATP synthesis. This is Cytochrome b (MT-CYB) from Eptatretus burgeri (Inshore hagfish).